The chain runs to 145 residues: Toxin Res (145 aa).

The protein belongs to the MbcT/ParT/Res family. As to quaternary structure, homodimer. Forms a complex with cognate antitoxin Xre; the 2 toxin molecules dimerize and each contacts an Xre homodimer. Most Res-Xre contacts are between the antitoxin molecule closest to the toxin.

Toxic component of a type II toxin-antitoxin (TA) system. Expression in E.coli inhibits cell growth. In vivo it is probably neutralized by cognate antitoxin Xre; this has not been shown upon expression in E.coli. Probably depletes intracellular NAD(+). The sequence is that of Toxin Res from Pseudomonas putida (strain ATCC 47054 / DSM 6125 / CFBP 8728 / NCIMB 11950 / KT2440).